Here is a 626-residue protein sequence, read N- to C-terminus: Two-component response regulator ORR24 (626 aa).

Positions 1–22 (MTVEERQGRVGGHGVSGGGGGR) are disordered. Residues 9–22 (RVGGHGVSGGGGGR) are compositionally biased toward gly residues. The 116-residue stretch at 30-145 (RVLAVDDDPT…QLRTIWQHVI (116 aa)) folds into the Response regulatory domain. D81 carries the post-translational modification 4-aspartylphosphate. Basic and acidic residues predominate over residues 151-162 (DAKNRGNDDDAG). Disordered regions lie at residues 151-215 (DAKN…KKPR) and 402-440 (PLESSNQQHLSRVHSSSADPFSTLVGESPQFPDLGRTTN). Over residues 191–202 (NGDDGDDSDENS) the composition is skewed to acidic residues. Residues 210–269 (TQKKPRVVWSVELHRKFVAAVNQLGIEKAVPKKILDLMNVENITRENVASHLQKYRLYLK) constitute a DNA-binding region (myb-like GARP). Over residues 402–421 (PLESSNQQHLSRVHSSSADP) the composition is skewed to polar residues.

The protein belongs to the ARR family. Type-B subfamily. Post-translationally, two-component system major event consists of a His-to-Asp phosphorelay between a sensor histidine kinase (HK) and a response regulator (RR). In plants, the His-to-Asp phosphorelay involves an additional intermediate named Histidine-containing phosphotransfer protein (HPt). This multistep phosphorelay consists of a His-Asp-His-Asp sequential transfer of a phosphate group between first a His and an Asp of the HK protein, followed by the transfer to a conserved His of the HPt protein and finally the transfer to an Asp in the receiver domain of the RR protein.

It localises to the nucleus. Functionally, transcriptional activator that binds specific DNA sequence. Functions as a response regulator involved in His-to-Asp phosphorelay signal transduction system. Phosphorylation of the Asp residue in the receiver domain activates the ability of the protein to promote the transcription of target genes. May directly activate some type-A response regulators in response to cytokinins. The protein is Two-component response regulator ORR24 of Oryza sativa subsp. japonica (Rice).